The chain runs to 345 residues: Histidinol-phosphate aminotransferase (345 aa).

Lysine 206 is subject to N6-(pyridoxal phosphate)lysine.

The protein belongs to the class-II pyridoxal-phosphate-dependent aminotransferase family. Histidinol-phosphate aminotransferase subfamily. As to quaternary structure, homodimer. Pyridoxal 5'-phosphate is required as a cofactor.

The enzyme catalyses L-histidinol phosphate + 2-oxoglutarate = 3-(imidazol-4-yl)-2-oxopropyl phosphate + L-glutamate. It functions in the pathway amino-acid biosynthesis; L-histidine biosynthesis; L-histidine from 5-phospho-alpha-D-ribose 1-diphosphate: step 7/9. This Bacteroides fragilis (strain YCH46) protein is Histidinol-phosphate aminotransferase.